An 85-amino-acid polypeptide reads, in one-letter code: UPF0335 protein BQ12070 (85 aa).

It belongs to the UPF0335 family.

The chain is UPF0335 protein BQ12070 from Bartonella quintana (strain Toulouse) (Rochalimaea quintana).